Here is a 126-residue protein sequence, read N- to C-terminus: Fluoride-specific ion channel FluC 3 (126 aa).

The next 4 membrane-spanning stretches (helical) occupy residues 7 to 27 (MWVG…GLSI), 37 to 57 (LGTF…SILF), 68 to 87 (LMNT…FSSM), and 101 to 121 (AIAA…AAFG). Na(+) contacts are provided by Gly-79 and Thr-82.

It belongs to the fluoride channel Fluc/FEX (TC 1.A.43) family.

Its subcellular location is the cell inner membrane. It catalyses the reaction fluoride(in) = fluoride(out). With respect to regulation, na(+) is not transported, but it plays an essential structural role and its presence is essential for fluoride channel function. Functionally, fluoride-specific ion channel. Important for reducing fluoride concentration in the cell, thus reducing its toxicity. The protein is Fluoride-specific ion channel FluC 3 of Yersinia pestis.